The chain runs to 572 residues: Proline--tRNA ligase (572 aa).

Belongs to the class-II aminoacyl-tRNA synthetase family. ProS type 1 subfamily. Homodimer.

The protein localises to the cytoplasm. The enzyme catalyses tRNA(Pro) + L-proline + ATP = L-prolyl-tRNA(Pro) + AMP + diphosphate. Its function is as follows. Catalyzes the attachment of proline to tRNA(Pro) in a two-step reaction: proline is first activated by ATP to form Pro-AMP and then transferred to the acceptor end of tRNA(Pro). As ProRS can inadvertently accommodate and process non-cognate amino acids such as alanine and cysteine, to avoid such errors it has two additional distinct editing activities against alanine. One activity is designated as 'pretransfer' editing and involves the tRNA(Pro)-independent hydrolysis of activated Ala-AMP. The other activity is designated 'posttransfer' editing and involves deacylation of mischarged Ala-tRNA(Pro). The misacylated Cys-tRNA(Pro) is not edited by ProRS. This chain is Proline--tRNA ligase, found in Klebsiella pneumoniae subsp. pneumoniae (strain ATCC 700721 / MGH 78578).